Here is a 473-residue protein sequence, read N- to C-terminus: Spliceosome-associated protein CWC27 homolog (473 aa).

Residue serine 2 is modified to N-acetylserine. A PPIase cyclophilin-type domain is found at threonine 11–valine 166. Residues arginine 177 to lysine 193 are compositionally biased toward basic and acidic residues. Disordered stretches follow at residues arginine 177–threonine 386 and glutamine 399–arginine 473. Residues serine 206–lysine 230 are a coiled coil. Positions serine 231–histidine 241 are enriched in basic and acidic residues. Residues glycine 257–aspartate 275 show a composition bias toward acidic residues. 3 stretches are compositionally biased toward basic and acidic residues: residues glycine 276–alanine 287, glutamate 305–glutamate 348, and glutamate 360–arginine 372. Residues glutamate 307–lysine 378 adopt a coiled-coil conformation. Residue serine 347 is modified to Phosphoserine. A compositionally biased stretch (acidic residues) spans proline 405–glycine 419. 2 stretches are compositionally biased toward basic and acidic residues: residues glutamine 426–serine 438 and arginine 458–arginine 473.

Belongs to the cyclophilin-type PPIase family. Part of the activated spliceosome B/catalytic step 1 spliceosome, one of the forms of the spliceosome which has a well-formed active site but still cannot catalyze the branching reaction and is composed at least of 52 proteins, the U2, U5 and U6 snRNAs and the pre-mRNA. Recruited during early steps of activated spliceosome B maturation, it is probably one of the first proteins released from this complex as he matures to the spliceosome C complex. Component of the minor spliceosome, which splices U12-type introns.

Its subcellular location is the nucleus. As part of the spliceosome, plays a role in pre-mRNA splicing. Probable inactive PPIase with no peptidyl-prolyl cis-trans isomerase activity. As a component of the minor spliceosome, involved in the splicing of U12-type introns in pre-mRNAs. The chain is Spliceosome-associated protein CWC27 homolog from Macaca fascicularis (Crab-eating macaque).